Reading from the N-terminus, the 236-residue chain is Aquaporin Z (236 aa).

A run of 2 helical transmembrane segments spans residues 12 to 32 and 37 to 57; these read FFGT…AAGV and IGYA…AYAV. The short motif at 66–68 is the NPA 1 element; the sequence is NPA. Transmembrane regions (helical) follow at residues 92 to 112, 136 to 156, and 163 to 183; these read VVGA…VAGF, AALI…LGAT, and GFAP…SIPV. Positions 189 to 191 match the NPA 2 motif; it reads NPA. A helical membrane pass occupies residues 197–217; that stretch reads ALFVGGWALEQLWLFWLAPIA.

This sequence belongs to the MIP/aquaporin (TC 1.A.8) family. In terms of assembly, homotetramer.

Its subcellular location is the cell inner membrane. It carries out the reaction H2O(in) = H2O(out). Functionally, channel that permits osmotically driven movement of water in both directions. It is involved in the osmoregulation and in the maintenance of cell turgor during volume expansion in rapidly growing cells. It mediates rapid entry or exit of water in response to abrupt changes in osmolarity. This Bordetella bronchiseptica (strain ATCC BAA-588 / NCTC 13252 / RB50) (Alcaligenes bronchisepticus) protein is Aquaporin Z.